A 1227-amino-acid polypeptide reads, in one-letter code: DNA-directed RNA polymerase subunit beta' (1227 aa).

Cys-60, Cys-62, Cys-75, and Cys-78 together coordinate Zn(2+). Mg(2+) is bound by residues Asp-449, Asp-451, and Asp-453. Zn(2+)-binding residues include Cys-847, Cys-921, Cys-928, and Cys-931.

Belongs to the RNA polymerase beta' chain family. As to quaternary structure, the RNAP catalytic core consists of 2 alpha, 1 beta, 1 beta' and 1 omega subunit. When a sigma factor is associated with the core the holoenzyme is formed, which can initiate transcription. Mg(2+) is required as a cofactor. The cofactor is Zn(2+).

The catalysed reaction is RNA(n) + a ribonucleoside 5'-triphosphate = RNA(n+1) + diphosphate. DNA-dependent RNA polymerase catalyzes the transcription of DNA into RNA using the four ribonucleoside triphosphates as substrates. This Lysinibacillus sphaericus (strain C3-41) protein is DNA-directed RNA polymerase subunit beta'.